Consider the following 138-residue polypeptide: Mini-ribonuclease 3 (138 aa).

Aspartate 33 is a catalytic residue.

It belongs to the MrnC RNase family. In terms of assembly, homodimer. Mg(2+) is required as a cofactor.

Its subcellular location is the cytoplasm. Its function is as follows. Involved in correct processing of both the 5' and 3' ends of 23S rRNA precursor. Processes 30S rRNA precursor transcript even in absence of ribonuclease 3 (Rnc); Rnc processes 30S rRNA into smaller rRNA precursors. The chain is Mini-ribonuclease 3 from Synechococcus sp. (strain ATCC 27144 / PCC 6301 / SAUG 1402/1) (Anacystis nidulans).